A 217-amino-acid chain; its full sequence is Putative cobalt transport protein CbiM (217 aa).

6 helical membrane passes run L8 to A28, L44 to T64, G74 to L94, T107 to F127, V139 to A161, and I181 to V201.

It belongs to the CbiM family. In terms of assembly, forms an energy-coupling factor (ECF) transporter complex composed of an ATP-binding protein (A component, CbiO), a transmembrane protein (T component, CbiQ) and 2 possible substrate-capture proteins (S components, CbiM and CbiN) of unknown stoichimetry.

It is found in the cell membrane. The protein operates within cofactor biosynthesis; adenosylcobalamin biosynthesis. In terms of biological role, part of the energy-coupling factor (ECF) transporter complex CbiMNOQ involved in cobalt import. The polypeptide is Putative cobalt transport protein CbiM (Archaeoglobus fulgidus (strain ATCC 49558 / DSM 4304 / JCM 9628 / NBRC 100126 / VC-16)).